Here is a 931-residue protein sequence, read N- to C-terminus: Chitin synthase III (931 aa).

N37 and N94 each carry an N-linked (GlcNAc...) asparagine glycan. A disordered region spans residues 93 to 154 (PNASQLPPAG…PGGVGQAGGL (62 aa)). Residues 102–122 (GSGGFGDNGFGQYGQPQGFGG) show a composition bias toward gly residues. A glycan (N-linked (GlcNAc...) asparagine) is linked at N558. A run of 5 helical transmembrane segments spans residues 585–605 (FFLH…WFSL), 644–664 (IINA…FILA), 677–697 (IASF…SGYL), 731–751 (VILI…FLYL), and 759–779 (SFPY…VYAF). N-linked (GlcNAc...) asparagine glycosylation occurs at N802. The next 2 helical transmembrane spans lie at 858–878 (TGLV…ITSD) and 899–919 (FLLY…LWFL).

This sequence belongs to the chitin synthase family. Class III subfamily. As to expression, highly expressed in conidia and during appressorium formation.

The protein resides in the cell membrane. The catalysed reaction is [(1-&gt;4)-N-acetyl-beta-D-glucosaminyl](n) + UDP-N-acetyl-alpha-D-glucosamine = [(1-&gt;4)-N-acetyl-beta-D-glucosaminyl](n+1) + UDP + H(+). Its function is as follows. Polymerizes chitin, a structural polymer of the cell wall and septum, by transferring the sugar moiety of UDP-GlcNAc to the non-reducing end of the growing chitin polymer. Contributes to the production of conidia and the ability of fungal conidia to germinate. Involved in the fungal cell wall integrity and the ability of conidia to withstand biophysical pressure. Required for appressorium formation and evasion of insect cellular and/or humoral defenses, promoting the fungal dimorphic transition to the production of hyphal bodies that occurs within hosts, and ultimately to virulence. The protein is Chitin synthase III of Metarhizium acridum (strain CQMa 102).